We begin with the raw amino-acid sequence, 365 residues long: Chorismate synthase (365 aa).

Residue Arg46 coordinates NADP(+). Residues 123-125 (RSS), 241-242 (NG), Gly281, 296-300 (KPTPS), and Arg322 contribute to the FMN site.

It belongs to the chorismate synthase family. In terms of assembly, homotetramer. FMNH2 is required as a cofactor.

It catalyses the reaction 5-O-(1-carboxyvinyl)-3-phosphoshikimate = chorismate + phosphate. It participates in metabolic intermediate biosynthesis; chorismate biosynthesis; chorismate from D-erythrose 4-phosphate and phosphoenolpyruvate: step 7/7. Catalyzes the anti-1,4-elimination of the C-3 phosphate and the C-6 proR hydrogen from 5-enolpyruvylshikimate-3-phosphate (EPSP) to yield chorismate, which is the branch point compound that serves as the starting substrate for the three terminal pathways of aromatic amino acid biosynthesis. This reaction introduces a second double bond into the aromatic ring system. The chain is Chorismate synthase from Helicobacter pylori (strain Shi470).